The sequence spans 256 residues: GCN5-related N-acetyltransferase 10, chloroplastic (256 aa).

Residues Met-1–Arg-41 constitute a chloroplast transit peptide. The N-acetyltransferase domain maps to Phe-106 to Ser-256. Residues Leu-178–Val-180, Arg-186–Ser-191, Asp-217–Ala-219, and Tyr-224 each bind acetyl-CoA. The Proton donor role is filled by Tyr-224.

Belongs to the acetyltransferase family. GNAT subfamily. As to quaternary structure, oligomer. Autoacetylated. In terms of tissue distribution, expressed in green tissues.

The protein resides in the plastid. The protein localises to the chloroplast. It carries out the reaction an N-terminal L-alpha-aminoacyl-[protein] + acetyl-CoA = N-terminal N(alpha)-acetyl-L-alpha-aminoacyl-[protein] + CoA + H(+). It catalyses the reaction L-lysyl-[protein] + acetyl-CoA = N(6)-acetyl-L-lysyl-[protein] + CoA + H(+). The enzyme catalyses N-terminal L-methionyl-[protein] + acetyl-CoA = N-terminal N(alpha)-acetyl-L-methionyl-[protein] + CoA + H(+). The catalysed reaction is N-terminal L-seryl-[protein] + acetyl-CoA = N-terminal N(alpha)-acetyl-L-seryl-[protein] + CoA + H(+). It carries out the reaction N-terminal L-valyl-[protein] + acetyl-CoA = N-terminal N(alpha)-acetyl-L-valyl-[protein] + CoA + H(+). It catalyses the reaction N-terminal L-threonyl-[protein] + acetyl-CoA = N-terminal N(alpha)-acetyl-L-threonyl-[protein] + CoA + H(+). The enzyme catalyses N-terminal L-alanyl-[protein] + acetyl-CoA = N-terminal N(alpha)-acetyl-L-alanyl-[protein] + CoA + H(+). The catalysed reaction is N-terminal glycyl-[protein] + acetyl-CoA = N-terminal N(alpha)-acetylglycyl-[protein] + CoA + H(+). Functionally, protein acetyltransferase with dual specificity triggering both N-alpha-acetylation (NTA), with a preference for leucine, methionine, serine, valine and to a lower extent threonine and alanine as substrates (can also use glycine), and epsilon-lysine acetylation (KA) of several plastid proteins. The polypeptide is GCN5-related N-acetyltransferase 10, chloroplastic (Arabidopsis thaliana (Mouse-ear cress)).